A 145-amino-acid polypeptide reads, in one-letter code: 3-hydroxyacyl-[acyl-carrier-protein] dehydratase FabZ (145 aa).

His48 is a catalytic residue.

It belongs to the thioester dehydratase family. FabZ subfamily.

Its subcellular location is the cytoplasm. The enzyme catalyses a (3R)-hydroxyacyl-[ACP] = a (2E)-enoyl-[ACP] + H2O. Involved in unsaturated fatty acids biosynthesis. Catalyzes the dehydration of short chain beta-hydroxyacyl-ACPs and long chain saturated and unsaturated beta-hydroxyacyl-ACPs. This is 3-hydroxyacyl-[acyl-carrier-protein] dehydratase FabZ from Campylobacter hominis (strain ATCC BAA-381 / DSM 21671 / CCUG 45161 / LMG 19568 / NCTC 13146 / CH001A).